Reading from the N-terminus, the 359-residue chain is DNA replication and repair protein RecF (359 aa).

ATP is bound at residue 30 to 37 (GPNAKGKT).

The protein belongs to the RecF family.

It is found in the cytoplasm. Its function is as follows. The RecF protein is involved in DNA metabolism; it is required for DNA replication and normal SOS inducibility. RecF binds preferentially to single-stranded, linear DNA. It also seems to bind ATP. This chain is DNA replication and repair protein RecF, found in Protochlamydia amoebophila (strain UWE25).